The following is a 112-amino-acid chain: UPF0342 protein SPH_1504 (112 aa).

The protein belongs to the UPF0342 family.

The polypeptide is UPF0342 protein SPH_1504 (Streptococcus pneumoniae (strain Hungary19A-6)).